A 251-amino-acid polypeptide reads, in one-letter code: Transcriptional cofactor Bfc (251 aa).

In terms of assembly, interacts with srp (via GATA-type Zn-finger domain); this interaction enhances srp binding to the promoter of crq/croquemort.

It is found in the nucleus. In terms of biological role, transcriptional cofactor involved in efferocytosis. Together with srp mediates expression of the phagocytic receptor crq/croquemort in response to apoptotic cells, and is up-regulated by crq/croquemort in a positive feedback mechanism. Involved in macrophage engulfment and clearance of apoptotic cells during embryogenesis. The polypeptide is Transcriptional cofactor Bfc (Drosophila melanogaster (Fruit fly)).